The following is a 571-amino-acid chain: Proline--tRNA ligase (571 aa).

Belongs to the class-II aminoacyl-tRNA synthetase family. ProS type 1 subfamily. Homodimer.

Its subcellular location is the cytoplasm. It carries out the reaction tRNA(Pro) + L-proline + ATP = L-prolyl-tRNA(Pro) + AMP + diphosphate. Its function is as follows. Catalyzes the attachment of proline to tRNA(Pro) in a two-step reaction: proline is first activated by ATP to form Pro-AMP and then transferred to the acceptor end of tRNA(Pro). As ProRS can inadvertently accommodate and process non-cognate amino acids such as alanine and cysteine, to avoid such errors it has two additional distinct editing activities against alanine. One activity is designated as 'pretransfer' editing and involves the tRNA(Pro)-independent hydrolysis of activated Ala-AMP. The other activity is designated 'posttransfer' editing and involves deacylation of mischarged Ala-tRNA(Pro). The misacylated Cys-tRNA(Pro) is not edited by ProRS. The chain is Proline--tRNA ligase from Mannheimia succiniciproducens (strain KCTC 0769BP / MBEL55E).